The following is a 163-amino-acid chain: MNAKDNETAEFETTADLAMIQRILPHRYPFLLVDKVIDMVRFKSALGIKNVTFNEPHFQGHFPGEPIMPGVMIVEALAQTSAVLVGHSMASADEDVSVYFMSIDNCKFRRKVVPGDVMSLRVETMRGKPGGKVWKFLGEAIVEDTVAAQAEFTAMISFPQAAA.

The active site involves His-61.

It belongs to the thioester dehydratase family. FabZ subfamily.

It is found in the cytoplasm. The catalysed reaction is a (3R)-hydroxyacyl-[ACP] = a (2E)-enoyl-[ACP] + H2O. Involved in unsaturated fatty acids biosynthesis. Catalyzes the dehydration of short chain beta-hydroxyacyl-ACPs and long chain saturated and unsaturated beta-hydroxyacyl-ACPs. This Dinoroseobacter shibae (strain DSM 16493 / NCIMB 14021 / DFL 12) protein is 3-hydroxyacyl-[acyl-carrier-protein] dehydratase FabZ.